Consider the following 802-residue polypeptide: E3 ubiquitin-protein ligase RNF10 (802 aa).

Composition is skewed to low complexity over residues 1 to 31 (MPQS…SGSS), 78 to 90 (SNQS…QKSK), and 104 to 113 (SKPFSSSSNG). The tract at residues 1–134 (MPQSSPSTAA…AEFSPAQFSG (134 aa)) is disordered. Ser5 carries the post-translational modification Phosphoserine. A Phosphoserine modification is found at Ser110. The segment covering 114-124 (GRRDEVAEAQR) has biased composition (basic and acidic residues). Ser128 carries the phosphoserine modification. Residues 225–267 (CPICLYPPTAAKITRCGHIFCWACILHYLSLSERTWSKCPICY) form an RING-type zinc finger. Polar residues predominate over residues 645 to 654 (DSALGPTSTE). 3 disordered regions span residues 645–664 (DSAL…LSPL), 716–753 (DGWP…VPSF), and 767–802 (KLDT…VHTK). The span at 716–728 (DGWPKAAPKKDDN) shows a compositional bias: basic and acidic residues. A compositionally biased stretch (polar residues) spans 793 to 802 (LFSTSVVHTK).

This sequence belongs to the RNF10 family. In terms of assembly, interacts with MEOX2.

The protein resides in the cytoplasm. Its subcellular location is the nucleus. The catalysed reaction is S-ubiquitinyl-[E2 ubiquitin-conjugating enzyme]-L-cysteine + [acceptor protein]-L-lysine = [E2 ubiquitin-conjugating enzyme]-L-cysteine + N(6)-ubiquitinyl-[acceptor protein]-L-lysine.. It functions in the pathway protein modification; protein ubiquitination. Functionally, E3 ubiquitin-protein ligase that catalyzes monoubiquitination of 40S ribosomal proteins RPS2/us5 and RPS3/us3 in response to ribosome stalling. Part of a ribosome quality control that takes place when ribosomes have stalled during translation initiation (iRQC): RNF10 acts by mediating monoubiquitination of RPS2/us5 and RPS3/us3, promoting their degradation by the proteasome. Also promotes ubiquitination of 40S ribosomal proteins in response to ribosome stalling during translation elongation. The action of RNF10 in iRQC is counteracted by USP10. May also act as a transcriptional factor involved in the regulation of MAG (Myelin-associated glycoprotein) expression. Acts as a regulator of Schwann cell differentiation and myelination. The protein is E3 ubiquitin-protein ligase RNF10 of Rattus norvegicus (Rat).